The primary structure comprises 921 residues: Short transient receptor potential channel 3 (921 aa).

Positions 1-73 are disordered; it reads MSTKVRKCKE…PPFSHGPDLS (73 aa). Residues 1-459 lie on the Cytoplasmic side of the membrane; it reads MSTKVRKCKE…KILRSPFMKF (459 aa). Residues 19 to 31 show a composition bias toward acidic residues; sequence PEEEEDEGEDEGA. ANK repeat units follow at residues 111–140, 146–175, 177–203, and 232–261; these read AEEERFLDAAEYGNIPVVRKMLEESKTLNV, MGQNALQLAVGNEHLEVTELLLKKENLARI, DALLLAISKGYVRIVEAILNHPGFAAS, and PDITPIILAAHCQKYEVVHMLLMKGARIER. Glu158 provides a ligand contact to Ca(2+). The chain crosses the membrane as a helical span at residues 460-477; the sequence is VAHAASFIIFLGLLVFNA. The Extracellular segment spans residues 478–508; that stretch reads SDRFEGITTLPNITVTDYPKQIFRVKTTQFT. The N-linked (GlcNAc...) asparagine glycan is linked to Asn489. A helical transmembrane segment spans residues 509 to 527; the sequence is WTEMLIMVWVLGMMWSECK. 3 residues coordinate Ca(2+): Glu525, Glu528, and Asn543. Topologically, residues 528 to 540 are cytoplasmic; it reads ELWLEGPREYILQ. A helical transmembrane segment spans residues 541-562; it reads LWNVLDFGMLSIFIAAFTARFL. The Extracellular segment spans residues 563–606; the sequence is AFLQATKAQQYVDSYVQESDLSEVTLPPEIQYFTYARDKWLPSD. The chain crosses the membrane as a helical span at residues 607-630; sequence PQIISEGLYAIAVVLSFSRIAYIL. Residues 631-649 lie on the Cytoplasmic side of the membrane; the sequence is PANESFGPLQISLGRTVKD. The stretch at 634-663 is one ANK 5 repeat; sequence ESFGPLQISLGRTVKDIFKFMVLFIMVFFA. The helical transmembrane segment at 650-673 threads the bilayer; it reads IFKFMVLFIMVFFAFMIGMFILYS. The Extracellular portion of the chain corresponds to 674–713; sequence YYLGAKVNAAFTTVEESFKTLFWSIFGLSEVTSVVLKYDH. A helical membrane pass occupies residues 714-739; it reads KFIENIGYVLYGIYNVTMVVVLLNML. The Cytoplasmic segment spans residues 740–921; sequence IAMINSSYQE…KLNPSMLRCE (182 aa). Residues 850–870 form a binds to IP3R3 region; that stretch reads QIMKRLIKRYVLKAQVDKEND. Residues Glu871, Glu874, Glu876, and Asp883 each coordinate Ca(2+).

The protein belongs to the transient receptor (TC 1.A.4) family. STrpC subfamily. TRPC3 sub-subfamily. Homotetramer. Interacts with ITPR1. Interacts with ITPR3. Interacts with MX1. Interacts with RNF24. Interacts with JPH2; the interaction is involved in maintaining Ca(2+) homeostasis in skeletal muscle and is mediated by JPH2 'Ser-165' phosphorylation. In terms of assembly, interacts with isoform short of TRPC1. In terms of tissue distribution, expressed predominantly in brain and at much lower levels in ovary, colon, small intestine, lung, prostate, placenta and testis.

Its subcellular location is the cell membrane. It catalyses the reaction Ca(2+)(in) = Ca(2+)(out). With respect to regulation, activated by diacylglycerol (DAG) in a membrane-delimited fashion, independently of protein kinase C. Activated by inositol 1,4,5-triphosphate receptors (ITPR) with bound IP3. May be activated by internal calcium store depletion. Inhibited by intracellular Ca(2+). Forms a receptor-activated non-selective calcium permeant cation channel. Functionally, forms a receptor-activated non-selective calcium permeant cation channel. May be operated by a phosphatidylinositol second messenger system activated by receptor tyrosine kinases or G-protein coupled receptors. The polypeptide is Short transient receptor potential channel 3 (TRPC3) (Homo sapiens (Human)).